Reading from the N-terminus, the 248-residue chain is Short-chain dehydrogenase/reductase iacG (248 aa).

6 residues coordinate NADP(+): isoleucine 14, asparagine 35, lysine 41, aspartate 58, arginine 120, and valine 187.

This sequence belongs to the short-chain dehydrogenases/reductases (SDR) family.

Its pathway is secondary metabolite biosynthesis. Its function is as follows. Short-chain dehydrogenase/reductase; part of the gene cluster that mediates the biosynthesis of iso-A82775C, a enylepoxycyclohexane and biosynthetic precursor of the chloropestolide anticancer natural products. Within the cluster, the prenyltransferase iacE prenylates siccayne to generate pestalodiol E, using dimethylallyl diphosphate (DMAPP) as cosubstrate. The probable oxidoreductase iacF is then involved in the epoxidation of pestalodiol F to pestalodiol F, which is further converted to pestalofone A by the short-chain dehydrogenase/reductase iacG. Iso-A82775C is subsequently generated from pestalofone A by the short-chain dehydrogenase/reductase iacC. Iso-A82775C is further condensed with maldoxin via a Diels-Alder reaction to produce the anticancer natural products chloropestolides A to E. In Pestalotiopsis fici (strain W106-1 / CGMCC3.15140), this protein is Short-chain dehydrogenase/reductase iacG.